Consider the following 122-residue polypeptide: MKSVLYSYILFLSCIIINGRDIAPHAPSDGKCKDNEYKRHNLCPGTYASRLCDSKTNTQCTPCGSGTFTSRNNHLPACLSCNGRRDRVTRLTIESVNALPDIIVFSKDHPDARHVFPKQNVE.

Its function is as follows. The protein is truncated in this strain and presumably inactive. It has similarities with variola virus CrmB, but the product is inactivated due to several premature stop codons. This Bos taurus (Bovine) protein is Truncated CrmB protein (OPG002).